A 99-amino-acid polypeptide reads, in one-letter code: Large ribosomal subunit protein eL30 (99 aa).

This sequence belongs to the eukaryotic ribosomal protein eL30 family.

This Methanobrevibacter smithii (strain ATCC 35061 / DSM 861 / OCM 144 / PS) protein is Large ribosomal subunit protein eL30.